The primary structure comprises 421 residues: Gamma-glutamyl phosphate reductase (421 aa).

The protein belongs to the gamma-glutamyl phosphate reductase family.

Its subcellular location is the cytoplasm. The catalysed reaction is L-glutamate 5-semialdehyde + phosphate + NADP(+) = L-glutamyl 5-phosphate + NADPH + H(+). It participates in amino-acid biosynthesis; L-proline biosynthesis; L-glutamate 5-semialdehyde from L-glutamate: step 2/2. Functionally, catalyzes the NADPH-dependent reduction of L-glutamate 5-phosphate into L-glutamate 5-semialdehyde and phosphate. The product spontaneously undergoes cyclization to form 1-pyrroline-5-carboxylate. This Pseudomonas syringae pv. tomato (strain ATCC BAA-871 / DC3000) protein is Gamma-glutamyl phosphate reductase.